Consider the following 171-residue polypeptide: MEIILIKPVRKLGKIGDILKVADGFGRNYLLPQKLAIRATEPNKELIVKQKHEFEAKDKQIREEVEKINALIKDQQLVFIRQTSNDGKLFGSVTNKEIADKLSENISYNISHSNIILDKQIKSTGIYTVEIRLHAELNAIVTVIVARSESEAQDYLREQKTETSEDLAESA.

This sequence belongs to the bacterial ribosomal protein bL9 family.

Its function is as follows. Binds to the 23S rRNA. The protein is Large ribosomal subunit protein bL9 of Rickettsia peacockii (strain Rustic).